Consider the following 516-residue polypeptide: uncharacterized protein (516 aa).

The next 9 membrane-spanning stretches (helical) occupy residues 183 to 203 (SAADLPIWEAASGAVLVGDGV), 261 to 281 (VLKTTFGFLAFGLIVSATYII), 308 to 328 (VMNGFLACLVMLATGIGTALL), 329 to 349 (LDHQFALVASVYLALTLAYSF), 356 to 376 (LLDVTVIGALFTLRIVMGQVL), 379 to 399 (LAFSPWLFSFSVMFFISLALA), 430 to 450 (LGHGLASASASIVIMLLFLAL), 461 to 481 (PAWLYVAPLGVSIWLQRIWLL), and 492 to 512 (IVFALNDKTSWFIGALIASAF).

The protein resides in the cell membrane. Functionally, possible permease/transporter. This is an uncharacterized protein from Sinorhizobium fredii (strain NBRC 101917 / NGR234).